Reading from the N-terminus, the 310-residue chain is 4-hydroxy-3-methylbut-2-enyl diphosphate reductase (310 aa).

Cys-12 contacts [4Fe-4S] cluster. (2E)-4-hydroxy-3-methylbut-2-enyl diphosphate is bound by residues His-41 and His-74. Positions 41 and 74 each coordinate dimethylallyl diphosphate. Isopentenyl diphosphate is bound by residues His-41 and His-74. Cys-96 lines the [4Fe-4S] cluster pocket. His-124 lines the (2E)-4-hydroxy-3-methylbut-2-enyl diphosphate pocket. His-124 contacts dimethylallyl diphosphate. His-124 is a binding site for isopentenyl diphosphate. Glu-126 (proton donor) is an active-site residue. Thr-167 contributes to the (2E)-4-hydroxy-3-methylbut-2-enyl diphosphate binding site. Cys-197 is a binding site for [4Fe-4S] cluster. 4 residues coordinate (2E)-4-hydroxy-3-methylbut-2-enyl diphosphate: Ser-225, Ser-226, Asn-227, and Ser-269. Positions 225, 226, 227, and 269 each coordinate dimethylallyl diphosphate. Ser-225, Ser-226, Asn-227, and Ser-269 together coordinate isopentenyl diphosphate.

Belongs to the IspH family. [4Fe-4S] cluster serves as cofactor.

The catalysed reaction is isopentenyl diphosphate + 2 oxidized [2Fe-2S]-[ferredoxin] + H2O = (2E)-4-hydroxy-3-methylbut-2-enyl diphosphate + 2 reduced [2Fe-2S]-[ferredoxin] + 2 H(+). It carries out the reaction dimethylallyl diphosphate + 2 oxidized [2Fe-2S]-[ferredoxin] + H2O = (2E)-4-hydroxy-3-methylbut-2-enyl diphosphate + 2 reduced [2Fe-2S]-[ferredoxin] + 2 H(+). It participates in isoprenoid biosynthesis; dimethylallyl diphosphate biosynthesis; dimethylallyl diphosphate from (2E)-4-hydroxy-3-methylbutenyl diphosphate: step 1/1. It functions in the pathway isoprenoid biosynthesis; isopentenyl diphosphate biosynthesis via DXP pathway; isopentenyl diphosphate from 1-deoxy-D-xylulose 5-phosphate: step 6/6. In terms of biological role, catalyzes the conversion of 1-hydroxy-2-methyl-2-(E)-butenyl 4-diphosphate (HMBPP) into a mixture of isopentenyl diphosphate (IPP) and dimethylallyl diphosphate (DMAPP). Acts in the terminal step of the DOXP/MEP pathway for isoprenoid precursor biosynthesis. This Tolumonas auensis (strain DSM 9187 / NBRC 110442 / TA 4) protein is 4-hydroxy-3-methylbut-2-enyl diphosphate reductase.